A 235-amino-acid polypeptide reads, in one-letter code: Large ribosomal subunit protein uL1 (235 aa).

This sequence belongs to the universal ribosomal protein uL1 family. As to quaternary structure, part of the 50S ribosomal subunit.

Its function is as follows. Binds directly to 23S rRNA. The L1 stalk is quite mobile in the ribosome, and is involved in E site tRNA release. Functionally, protein L1 is also a translational repressor protein, it controls the translation of the L11 operon by binding to its mRNA. This Arthrobacter sp. (strain FB24) protein is Large ribosomal subunit protein uL1.